Reading from the N-terminus, the 200-residue chain is 3-isopropylmalate dehydratase small subunit (200 aa).

The protein belongs to the LeuD family. LeuD type 1 subfamily. As to quaternary structure, heterodimer of LeuC and LeuD.

The catalysed reaction is (2R,3S)-3-isopropylmalate = (2S)-2-isopropylmalate. Its pathway is amino-acid biosynthesis; L-leucine biosynthesis; L-leucine from 3-methyl-2-oxobutanoate: step 2/4. Catalyzes the isomerization between 2-isopropylmalate and 3-isopropylmalate, via the formation of 2-isopropylmaleate. This chain is 3-isopropylmalate dehydratase small subunit, found in Photobacterium profundum (strain SS9).